Consider the following 516-residue polypeptide: DNA topoisomerase large subunit (516 aa).

An ATP-binding site is contributed by 128–136 (VTGGMNGVG). Residues 369-400 (AALARKLAAEKAAETKAAKKASKAKVHKHIKA) mediate DNA binding.

It belongs to the type II topoisomerase family. As to quaternary structure, part of the DNA topoisomerase complex made of gp39, gp52 and gp60. The cofactor is Mg(2+).

It carries out the reaction ATP-dependent breakage, passage and rejoining of double-stranded DNA.. Large subunit of the DNA topoisomerase that untwists superhelical DNA. Controls of topological states of double-stranded DNA by transient breakage and subsequent rejoining of DNA strands. This Escherichia coli (Bacteriophage T4) protein is DNA topoisomerase large subunit (39).